Consider the following 210-residue polypeptide: Protein-L-isoaspartate O-methyltransferase (210 aa).

Ser52 is an active-site residue.

It belongs to the methyltransferase superfamily. L-isoaspartyl/D-aspartyl protein methyltransferase family.

The protein localises to the cytoplasm. The enzyme catalyses [protein]-L-isoaspartate + S-adenosyl-L-methionine = [protein]-L-isoaspartate alpha-methyl ester + S-adenosyl-L-homocysteine. Functionally, catalyzes the methyl esterification of L-isoaspartyl residues in peptides and proteins that result from spontaneous decomposition of normal L-aspartyl and L-asparaginyl residues. It plays a role in the repair and/or degradation of damaged proteins. This Protochlamydia amoebophila (strain UWE25) protein is Protein-L-isoaspartate O-methyltransferase.